Here is a 140-residue protein sequence, read N- to C-terminus: Coiled-coil domain-containing protein 126 (140 aa).

A signal peptide spans 1-35 (MFRTISRKNMSQKLSFLLLVFGLIWGLMLLHYTLQ). Asn110 carries N-linked (GlcNAc...) asparagine glycosylation. Residues 118-130 (NGTNGNLVPVTTN) show a composition bias toward low complexity. Residues 118–140 (NGTNGNLVPVTTNKRTSVSGSVR) form a disordered region. Positions 131-140 (KRTSVSGSVR) are enriched in polar residues.

It localises to the secreted. The sequence is that of Coiled-coil domain-containing protein 126 (Ccdc126) from Mus musculus (Mouse).